Here is a 169-residue protein sequence, read N- to C-terminus: Large ribosomal subunit protein uL10 (169 aa).

This sequence belongs to the universal ribosomal protein uL10 family. As to quaternary structure, part of the ribosomal stalk of the 50S ribosomal subunit. The N-terminus interacts with L11 and the large rRNA to form the base of the stalk. The C-terminus forms an elongated spine to which L12 dimers bind in a sequential fashion forming a multimeric L10(L12)X complex.

Forms part of the ribosomal stalk, playing a central role in the interaction of the ribosome with GTP-bound translation factors. This is Large ribosomal subunit protein uL10 from Deinococcus geothermalis (strain DSM 11300 / CIP 105573 / AG-3a).